Consider the following 122-residue polypeptide: MSTHSRPARVAEEFRHGLADVIARGLKDPRVTGFITVTGAKMSPDLKEVTAYVSIHAEDAERERTLEGLKAASTFLQREVARSLRLRHTPHLRFVYDESVARGDRIERLLKEAREKDSHGES.

Belongs to the RbfA family. Monomer. Binds 30S ribosomal subunits, but not 50S ribosomal subunits or 70S ribosomes.

It localises to the cytoplasm. In terms of biological role, one of several proteins that assist in the late maturation steps of the functional core of the 30S ribosomal subunit. Associates with free 30S ribosomal subunits (but not with 30S subunits that are part of 70S ribosomes or polysomes). Required for efficient processing of 16S rRNA. May interact with the 5'-terminal helix region of 16S rRNA. This is Ribosome-binding factor A from Anaeromyxobacter sp. (strain Fw109-5).